A 362-amino-acid chain; its full sequence is C-C chemokine receptor type 10 (362 aa).

Residues 1–48 (MGTKPTEQVSWGLYSGYDEEAYSVGPLPELCYKADVQAFSRAFQPSVS) lie on the Extracellular side of the membrane. Residues 49-69 (LMVAVLGLAGNGLVLATHLAA) traverse the membrane as a helical segment. The Cytoplasmic portion of the chain corresponds to 70–80 (RRTTRSPTSVH). Residues 81–101 (LLQLALADLLLALTLPFAAAG) form a helical membrane-spanning segment. Over 102–115 (ALQGWNLGSTTCRA) the chain is Extracellular. A disulfide bridge links C113 with C191. The helical transmembrane segment at 116–136 (ISGLYSASFHAGFLFLACISA) threads the bilayer. Topologically, residues 137–159 (DRYVAIARALPAGQRPSTPSRAH) are cytoplasmic. Residues 160–180 (LVSVFVWLLSLFLALPALLFS) traverse the membrane as a helical segment. The Extracellular portion of the chain corresponds to 181–208 (RDGPREGQRRCRLIFPESLTQTVKGASA). Residues 209 to 229 (VAQVVLGFALPLGVMAACYAL) form a helical membrane-spanning segment. Residues 230–247 (LGRTLLAARGPERRRALR) are Cytoplasmic-facing. A helical transmembrane segment spans residues 248–268 (VVVALVVAFVVLQLPYSLALL). Topologically, residues 269-291 (LDTADLLAARERSCSSSKRKDLA) are extracellular. Residues 292–312 (LLVTGGLTLVRCSLNPVLYAF) form a helical membrane-spanning segment. Over 313-362 (LGLRFRRDLRRLLQGGGCSPKPNPRGRCPRRLRLSSCSAPTETHSLSWDN) the chain is Cytoplasmic.

The protein belongs to the G-protein coupled receptor 1 family. Expressed at high levels in small intestine, colon, lymph nodes, Peyer patches and at lower levels in thymus, lung and spleen.

The protein localises to the cell membrane. Functionally, receptor for chemokines SCYA27 and SCYA28. Subsequently transduces a signal by increasing the intracellular calcium ions level. This is C-C chemokine receptor type 10 (Ccr10) from Mus musculus (Mouse).